A 696-amino-acid polypeptide reads, in one-letter code: Potassium voltage-gated channel subfamily KQT member 4 (696 aa).

The tract at residues 1-20 (MAEAPPRRLGLGPPPGDAPR) is disordered. Residues 1-97 (MAEAPPRRLG…VYNVLERPRG (97 aa)) lie on the Cytoplasmic side of the membrane. Arginine 94 lines the a 1,2-diacyl-sn-glycero-3-phospho-(1D-myo-inositol-4,5-bisphosphate) pocket. The chain crosses the membrane as a helical span at residues 98–119 (WAFVYHVFIFLLVFSCLVLSVL). The Extracellular segment spans residues 120–130 (STIQEHQELAN). A helical membrane pass occupies residues 131–153 (ECLLILEFVMIVVFGLEYIIRVW). At 154–169 (SAGCCCRYRGWQGRFR) the chain is on the cytoplasmic side. The chain crosses the membrane as a helical span at residues 170–192 (FARKPFCVIDFIVFVASVAVIAA). An a 1,2-diacyl-sn-glycero-3-phospho-(1D-myo-inositol-4,5-bisphosphate)-binding site is contributed by lysine 173. Residues 193-203 (GTQGNIFATSA) are Extracellular-facing. A helical; Voltage-sensor transmembrane segment spans residues 204–224 (LRSMRFLQILRMVRMDRRGGT). Arginine 220, arginine 221, lysine 226, and serine 236 together coordinate a 1,2-diacyl-sn-glycero-3-phospho-(1D-myo-inositol-4,5-bisphosphate). Residues 225–236 (WKLLGSVVYAHS) lie on the Cytoplasmic side of the membrane. Residues 237 to 259 (KELITAWYIGFLVLIFASFLVYL) form a helical membrane-spanning segment. The Extracellular segment spans residues 260–271 (AEKDANSDFSSY). An intramembrane region (pore-forming) is located at residues 272 to 293 (ADSLWWGTITLTTIGYGDKTPH). Threonine 294 is a topological domain (extracellular). A helical transmembrane segment spans residues 295-323 (WLGRVLAAGFALLGISFFALPAGILGSGF). The Cytoplasmic segment spans residues 324–696 (ALKVQEQHRQ…ISRSVSTNMD (373 aa)). Residues histidine 331 and lysine 334 each coordinate a 1,2-diacyl-sn-glycero-3-phospho-(1D-myo-inositol-4,5-bisphosphate). Residues 343–352 (AANLIQAAWR) are interaction with CALM. Positions 445 to 484 (SSQKRTGPSKQHLAPPPIPTSPSSEQVGEASSPSKVQKSW) are disordered. The segment covering 465-484 (SPSSEQVGEASSPSKVQKSW) has biased composition (polar residues). The interaction with CALM stretch occupies residues 536-550 (RSVRILKFLVAKRKF). A C-terminal assembly domain (tetramerization) region spans residues 547 to 651 (KRKFKETLRP…SRCLRSGTSA (105 aa)). Residues 589-609 (GRGPGDRKTREKGDKGPSDTE) are disordered. The segment covering 592-606 (PGDRKTREKGDKGPS) has biased composition (basic and acidic residues). A coiled-coil region spans residues 610–645 (AVDEISMMGRVVKVEKQVQSIEHKLDLLLGFYSRCL).

This sequence belongs to the potassium channel family. KQT (TC 1.A.1.15) subfamily. Kv7.4/KCNQ4 sub-subfamily. As to quaternary structure, homotetramer. Interacts (via C-terminus) with calmodulin; forms a heterooctameric structure (with 4:4 KCNQ1:CALM stoichiometry); the interaction is calcium-independent, constitutive, participates in the proper assembly of a functional channel. The interaction with calcium-free CALM controls channel trafficking whereas interaction with calcium-bound CALM regulates channel gating. May form a functional heteromultimeric channel with KCNQ3. Interacts with HSP90AB1; promotes cell surface expression of KCNQ4. In the inner ear expressed in the outer sensory hair cells of the cochlea and in type I hair cells of the vestibular organs. Also expressed in the postsynaptic membrane of the calyx nerve endings innervating type I cells. In the brain expressed in neurons of many, but not all, nuclei of the central auditory pathway. Absent from most other brain regions.

It localises to the basal cell membrane. The enzyme catalyses K(+)(in) = K(+)(out). Two molecules of phosphatidylinositol-4,5-bisphosphate (PIP2-I and PIP2-II) are essential to activate KCNQ4 channel by inducing the coupling of the voltage-sensing domain (VSD) and the pore-forming domain (PD). Upon channel activation, PIP2-I and PIP2-II disrupt the VSD-calmodulin/CALM interaction, causing the release of CALM from the VSD which triggers the opening of the gate. Calcium suppresses KCNQ4 channel current through calcium-bound CALM C-terminus. Therefore CALM acts as calcium sensor that controls channel activity. Functionally, pore-forming subunit of the voltage-gated potassium (Kv) channel involved in the regulation of sensory cells excitability in the cochlea. KCNQ4/Kv7.4 channel is composed of 4 pore-forming subunits assembled as tetramers. Promotes the outflow of potassium ions in the repolarization phase of action potential which plays a role in regulating membrane potential of excitable cells. The channel conducts a slowly activating and deactivating current. Current often shows some inward rectification at positive potentials. Channel may be selectively permeable in vitro to other cations besides potassium, in decreasing order of affinity K(+) = Rb(+) &gt; Cs(+) &gt; Na(+). Important for normal physiological function of inner ear such as sensory perception of sound. This Mus musculus (Mouse) protein is Potassium voltage-gated channel subfamily KQT member 4.